An 886-amino-acid polypeptide reads, in one-letter code: Extended synaptotagmin-3 (886 aa).

Residues 1 to 21 form a disordered region; the sequence is MRAEEPCAPGAPSALGAQRTP. Topologically, residues 1–29 are cytoplasmic; it reads MRAEEPCAPGAPSALGAQRTPGPELRLSS. Transmembrane regions (helical) follow at residues 30–50 and 51–71; these read QLLP…GPVY and LAGY…LWMW. Residues 72-886 lie on the Cytoplasmic side of the membrane; that stretch reads WRRNRRGKLG…ELTPNGQPRS (815 aa). The 178-residue stretch at 114 to 291 folds into the SMP-LTD domain; it reads DVERVEWANK…LPNRVTVPVK (178 aa). C2 domains lie at 291-408 and 426-566; these read KKGL…DEWF and SLLT…QLDH. 9 residues coordinate Ca(2+): Lys-321, Asp-322, Asp-332, Asp-379, Glu-380, Asp-381, Asp-383, Asp-385, and Asp-386. Residues 613–673 form a disordered region; that stretch reads QGPKAQPQEE…PEPKGKDSAK (61 aa). The span at 642 to 659 shows a compositional bias: low complexity; it reads RSTTTTTSATTVATEPTS. The segment covering 664–673 has biased composition (basic and acidic residues); that stretch reads PEPKGKDSAK. Residues 754 to 876 form the C2 3 domain; sequence QLGEIQLTVR…DLIKGFSQWY (123 aa). The tract at residues 801-808 is required for phosphatidylinositol 4,5-bisphosphate-dependent location at the cell membrane; the sequence is RKWACRKK.

The protein belongs to the extended synaptotagmin family. In terms of assembly, interacts with ESYT1 and ESYT2. In terms of tissue distribution, widely expressed with high level in cerebellum and skin.

It localises to the cell membrane. The protein resides in the endoplasmic reticulum membrane. Functionally, binds glycerophospholipids in a barrel-like domain and may play a role in cellular lipid transport. Tethers the endoplasmic reticulum to the cell membrane and promotes the formation of appositions between the endoplasmic reticulum and the cell membrane. The polypeptide is Extended synaptotagmin-3 (Homo sapiens (Human)).